The primary structure comprises 361 residues: Fructose-bisphosphate aldolase (361 aa).

Position 63 (serine 63) interacts with D-glyceraldehyde 3-phosphate. Aspartate 110 functions as the Proton donor in the catalytic mechanism. The Zn(2+) site is built by histidine 111, aspartate 145, glutamate 175, and histidine 227. Glycine 228 provides a ligand contact to dihydroxyacetone phosphate. Histidine 266 is a binding site for Zn(2+). Dihydroxyacetone phosphate is bound by residues 267–269 (GGS) and 288–291 (NLDT).

This sequence belongs to the class II fructose-bisphosphate aldolase family. Homodimer. Zn(2+) serves as cofactor.

The enzyme catalyses beta-D-fructose 1,6-bisphosphate = D-glyceraldehyde 3-phosphate + dihydroxyacetone phosphate. Its pathway is carbohydrate degradation; glycolysis; D-glyceraldehyde 3-phosphate and glycerone phosphate from D-glucose: step 4/4. Functionally, catalyzes the aldol condensation of dihydroxyacetone phosphate (DHAP or glycerone-phosphate) with glyceraldehyde 3-phosphate (G3P) to form fructose 1,6-bisphosphate (FBP) in gluconeogenesis and the reverse reaction in glycolysis. This is Fructose-bisphosphate aldolase (FBA1) from Kluyveromyces lactis (strain ATCC 8585 / CBS 2359 / DSM 70799 / NBRC 1267 / NRRL Y-1140 / WM37) (Yeast).